The chain runs to 298 residues: Peroxisomal 2,4-dienoyl-CoA reductase [(3E)-enoyl-CoA-producing] (298 aa).

19-24 (GGGSGI) lines the NADP(+) pocket. Arginine 44 serves as a coordination point for substrate. NADP(+) is bound at residue aspartate 69. Residues arginine 71, phenylalanine 101, and 109–111 (SPN) each bind substrate. NADP(+) is bound by residues lysine 173 and 200 to 206 (PGPIGGT). The tract at residues 279–298 (SRAVEKRSRAKPVGLPTSKL) is disordered. The Microbody targeting signal signature appears at 296 to 298 (SKL).

Belongs to the short-chain dehydrogenases/reductases (SDR) family. 2,4-dienoyl-CoA reductase subfamily.

It is found in the peroxisome. The enzyme catalyses a (2E,4Z)-dienoyl-CoA + NADPH + H(+) = a 4,5-saturated-(3E)-enoyl-CoA + NADP(+). It catalyses the reaction a (2E,4E)-dienoyl-CoA + NADPH + H(+) = a 4,5-saturated-(3E)-enoyl-CoA + NADP(+). In terms of biological role, auxiliary enzyme of beta-oxidation. Participates in the degradation of unsaturated fatty enoyl-CoA esters having double bonds in both even- and odd-numbered positions in peroxisome. Catalyzes the NADP-dependent reduction of 2,4-dienoyl-CoA to yield trans-3-enoyl-CoA. This is Peroxisomal 2,4-dienoyl-CoA reductase [(3E)-enoyl-CoA-producing] from Arabidopsis thaliana (Mouse-ear cress).